A 358-amino-acid chain; its full sequence is Chorismate synthase (358 aa).

Arg47 is an NADP(+) binding site. FMN contacts are provided by residues 124–126 (RSS), 240–241 (NA), Gly284, 299–303 (KPIAT), and Arg325.

This sequence belongs to the chorismate synthase family. Homotetramer. FMNH2 is required as a cofactor.

The catalysed reaction is 5-O-(1-carboxyvinyl)-3-phosphoshikimate = chorismate + phosphate. It participates in metabolic intermediate biosynthesis; chorismate biosynthesis; chorismate from D-erythrose 4-phosphate and phosphoenolpyruvate: step 7/7. Functionally, catalyzes the anti-1,4-elimination of the C-3 phosphate and the C-6 proR hydrogen from 5-enolpyruvylshikimate-3-phosphate (EPSP) to yield chorismate, which is the branch point compound that serves as the starting substrate for the three terminal pathways of aromatic amino acid biosynthesis. This reaction introduces a second double bond into the aromatic ring system. The chain is Chorismate synthase from Bacteroides thetaiotaomicron (strain ATCC 29148 / DSM 2079 / JCM 5827 / CCUG 10774 / NCTC 10582 / VPI-5482 / E50).